The following is a 176-amino-acid chain: Nuclear transcription factor Y subunit B-10 (176 aa).

The segment covering 1–15 (MAESQTGGGGGGSHE) has biased composition (gly residues). The tract at residues 1–29 (MAESQTGGGGGGSHESGGDQSPRSLNVRE) is disordered. An N-acetylalanine modification is found at A2. The DNA-binding element occupies 34–40 (LPIANIS). Residues 61 to 72 (MQECVSEFISFV) form a subunit association domain (SAD) region. The interval 121–176 (GDTKGSGKGGESSAKRDGQPSQVSQFSQVPQQGSFSQGPYGNSQGSNMMVQMPGTE) is disordered. The span at 139-159 (QPSQVSQFSQVPQQGSFSQGP) shows a compositional bias: low complexity. Residues 160–169 (YGNSQGSNMM) show a composition bias toward polar residues.

The protein belongs to the NFYB/HAP3 subunit family. Heterotrimeric transcription factor composed of three components, NF-YA, NF-YB and NF-YC. NF-YB and NF-YC must interact and dimerize for NF-YA association and DNA binding. In terms of tissue distribution, expressed in the whole plant, except roots.

It localises to the nucleus. Component of the NF-Y/HAP transcription factor complex. The NF-Y complex stimulates the transcription of various genes by recognizing and binding to a CCAAT motif in promoters. This Arabidopsis thaliana (Mouse-ear cress) protein is Nuclear transcription factor Y subunit B-10 (NFYB10).